The primary structure comprises 258 residues: UDP-2,3-diacylglucosamine hydrolase (258 aa).

Residues Asp-15, His-17, Asp-48, Asn-88, and His-123 each coordinate Mn(2+). Residue 88–89 coordinates substrate; that stretch reads NR. Residues Asp-131, Ser-169, Asn-173, Lys-176, and His-204 each contribute to the substrate site. Mn(2+)-binding residues include His-204 and His-206.

Belongs to the LpxH family. It depends on Mn(2+) as a cofactor.

The protein resides in the cell inner membrane. It catalyses the reaction UDP-2-N,3-O-bis[(3R)-3-hydroxytetradecanoyl]-alpha-D-glucosamine + H2O = 2-N,3-O-bis[(3R)-3-hydroxytetradecanoyl]-alpha-D-glucosaminyl 1-phosphate + UMP + 2 H(+). It participates in glycolipid biosynthesis; lipid IV(A) biosynthesis; lipid IV(A) from (3R)-3-hydroxytetradecanoyl-[acyl-carrier-protein] and UDP-N-acetyl-alpha-D-glucosamine: step 4/6. Functionally, hydrolyzes the pyrophosphate bond of UDP-2,3-diacylglucosamine to yield 2,3-diacylglucosamine 1-phosphate (lipid X) and UMP by catalyzing the attack of water at the alpha-P atom. Involved in the biosynthesis of lipid A, a phosphorylated glycolipid that anchors the lipopolysaccharide to the outer membrane of the cell. This chain is UDP-2,3-diacylglucosamine hydrolase, found in Bordetella pertussis (strain Tohama I / ATCC BAA-589 / NCTC 13251).